The chain runs to 66 residues: Large ribosomal subunit protein bL31 (66 aa).

Zn(2+) contacts are provided by C16, C18, C36, and C39.

It belongs to the bacterial ribosomal protein bL31 family. Type A subfamily. As to quaternary structure, part of the 50S ribosomal subunit. Zn(2+) serves as cofactor.

In terms of biological role, binds the 23S rRNA. This Campylobacter jejuni subsp. jejuni serotype O:6 (strain 81116 / NCTC 11828) protein is Large ribosomal subunit protein bL31.